A 213-amino-acid chain; its full sequence is Skin granule protein (213 aa).

The first 26 residues, 1 to 26 (METMYHRFLCIPFLLILGLAQGQSKG), serve as a signal peptide directing secretion. 3 consecutive repeat copies span residues 27–48 (LQTV…IRTG), 49–70 (LQPI…IRTG), and 71–92 (LQPI…IRTG). The segment at 27-104 (LQTVTTFRTG…PIATFQTGVQ (78 aa)) is 4 X 22 AA approximate tandem repeats. The 4; truncated repeat unit spans residues 93-104 (LQPIATFQTGVQ). The tract at residues 162–213 (WHGGRNGHKMKKLGKKKHHKNRHGGKNHHKMKKIGKHHGGGRKFGKKHRHHK) is disordered. Over residues 166 to 213 (RNGHKMKKLGKKKHHKNRHGGKNHHKMKKIGKHHGGGRKFGKKHRHHK) the composition is skewed to basic residues.

The protein resides in the secreted. This chain is Skin granule protein (sgp), found in Xenopus laevis (African clawed frog).